Here is a 149-residue protein sequence, read N- to C-terminus: MTVDNVFIHAVPREQIRRRYSYFEAFEKNCHIQGILSKRALYMLIPCFMEFAVGSIVYSFGVPGWVLGMNTVLAAGFLVMFLFLVWPCFQLVDERQIEEPGEDEMALNAGGYYPYAEEVPPPSYPSLEEENEGNEEIEESEEMNTLLSK.

The residue at position 21 (Ser-21) is a Phosphoserine. 2 helical membrane passes run 48–68 (FMEF…WVLG) and 72–92 (VLAA…FQLV). Residues 116–149 (AEEVPPPSYPSLEEENEGNEEIEESEEMNTLLSK) are disordered. Residues 127 to 142 (LEEENEGNEEIEESEE) are compositionally biased toward acidic residues.

It is found in the membrane. This is an uncharacterized protein from Schizosaccharomyces pombe (strain 972 / ATCC 24843) (Fission yeast).